We begin with the raw amino-acid sequence, 1128 residues long: Scavenger receptor cysteine-rich domain superfamily protein (1128 aa).

A signal peptide spans 1-24 (MTSLRRGNICWVAVCAALLTLTRG). Over 25–1051 (IDVIAKPSRT…VGAQAGPAGG (1027 aa)) the chain is Extracellular. SRCR domains lie at 40-140 (VQLV…VVCN), 143-245 (VRLA…VICT), 248-348 (IRLV…VICT), 351-450 (VRLV…AKCQ), 453-553 (VQLV…VVCR), 555-654 (IRLA…VVCR), 657-757 (LRLA…VVCT), 759-866 (LRLT…VLCK), and 868-968 (IRLV…VQCK). Cystine bridges form between C65–C129, C78–C139, C109–C119, C168–C234, C181–C244, C212–C222, C273–C337, C286–C347, C316–C326, C376–C439, C389–C449, C419–C429, C478–C542, C491–C552, C522–C532, C583–C644, C596–C653, C624–C634, C682–C746, C695–C756, and C726–C736. The N-linked (GlcNAc...) asparagine glycan is linked to N87. N-linked (GlcNAc...) asparagine glycosylation is found at N190 and N194. N-linked (GlcNAc...) asparagine glycosylation occurs at N229. N422 is a glycosylation site (N-linked (GlcNAc...) asparagine). N-linked (GlcNAc...) asparagine glycosylation is found at N601 and N612. 4 N-linked (GlcNAc...) asparagine glycosylation sites follow: N765, N808, N834, and N936. Cystine bridges form between C803–C865, C833–C843, C906–C967, C937–C947, C971–C1013, and C999–C1026. The 60-residue stretch at 969-1028 (AGCDWPGPIRHGSFSPNRSSYDPLTTIDVKCDAGYELMGSKTLQCVTGCDWSRPTPECQR) folds into the Sushi domain. N985 is a glycosylation site (N-linked (GlcNAc...) asparagine). N1031 carries N-linked (GlcNAc...) asparagine glycosylation. The chain crosses the membrane as a helical span at residues 1052 to 1072 (VMLIIGIILGAVVMMLIACVA). The Cytoplasmic portion of the chain corresponds to 1073-1128 (LYLKGRNKNIGRGNPATTSAIWKPKKEFDELKEPVLSFSAMTAGGAGPEDGMGEDI).

In terms of tissue distribution, from the mid-gastrula stage, expressed only in mesenchyme cells that are migrating toward the body wall. At the brachiolaria stage, expressed in presumptive coelomocytes of the coelomic pouch. Also expressed in adult coelomocytes (at protein level).

Its subcellular location is the cytoplasmic vesicle membrane. Functionally, involved in aggregate formation and phagocytosis by larval mesenchyme cells and adult coelomocytes. Binds to bacteria and may act as an opsonin in the innate immune system. The chain is Scavenger receptor cysteine-rich domain superfamily protein from Patiria pectinifera (Starfish).